The following is a 288-amino-acid chain: Homoserine kinase (288 aa).

79-89 (PPARGLGSSSA) contributes to the ATP binding site.

Belongs to the GHMP kinase family. Homoserine kinase subfamily.

The protein resides in the cytoplasm. It carries out the reaction L-homoserine + ATP = O-phospho-L-homoserine + ADP + H(+). Its pathway is amino-acid biosynthesis; L-threonine biosynthesis; L-threonine from L-aspartate: step 4/5. Functionally, catalyzes the ATP-dependent phosphorylation of L-homoserine to L-homoserine phosphate. The chain is Homoserine kinase from Listeria monocytogenes serotype 4b (strain F2365).